Here is a 498-residue protein sequence, read N- to C-terminus: Hexokinase-3 (498 aa).

The helical transmembrane segment at 4–24 (VAVAFAAVAVVAACSVAAVMV) threads the bilayer. Residues 35–494 (RTVVEILKEL…SSIGSALLVA (460 aa)) form the Hexokinase domain. A hexokinase small subdomain region spans residues 90–227 (TGREKGTYYA…GLDMHVAALV (138 aa)). Positions 104 and 105 each coordinate ADP. D-glucose contacts are provided by Thr193, Lys194, Asn228, and Asp229. The interval 228–483 (NDTVGALSLG…QYVVVKAMED (256 aa)) is hexokinase large subdomain. Residue Thr252 coordinates ADP. D-glucose is bound by residues Asn255, Glu283, and Glu314. Gly448 provides a ligand contact to ADP.

Belongs to the hexokinase family. Expressed in roots, emerging lateral roots, vascular tissues of cotyledons, roots and leaves, root and shoot meristems, anther filaments and funiculi of mature seeds.

The protein localises to the mitochondrion outer membrane. It carries out the reaction a D-hexose + ATP = a D-hexose 6-phosphate + ADP + H(+). It catalyses the reaction D-fructose + ATP = D-fructose 6-phosphate + ADP + H(+). The catalysed reaction is D-glucose + ATP = D-glucose 6-phosphate + ADP + H(+). It participates in carbohydrate metabolism; hexose metabolism. It functions in the pathway carbohydrate degradation; glycolysis; D-glyceraldehyde 3-phosphate and glycerone phosphate from D-glucose: step 1/4. Fructose and glucose phosphorylating enzyme. May be involved in the phosphorylation of glucose during the export from mitochondrion to cytosol. Plays a role in plant growth and development, perhaps by mediating cross-talk between glucose and hormone response pathways. Involved in root hair cell development by mediating certain aspects of cross talk between glucose and ethylene response pathways. The chain is Hexokinase-3 from Arabidopsis thaliana (Mouse-ear cress).